A 647-amino-acid polypeptide reads, in one-letter code: Macrolide export ATP-binding/permease protein MacB (647 aa).

Residues 7–245 (IRLEDICKTF…EATLQPHEEI (239 aa)) enclose the ABC transporter domain. Position 43 to 50 (43 to 50 (GASGSGKS)) interacts with ATP. 4 helical membrane passes run 274-294 (VLTLLGIIIGVSSVVTMLAIG), 529-549 (VAAISLLVGGIGVMNIMLVSV), 573-593 (FIIEALSVSAIGGAIGVILGL), and 610-630 (FGPVLLAFACAFATGLIFGFL).

The protein belongs to the ABC transporter superfamily. Macrolide exporter (TC 3.A.1.122) family. In terms of assembly, homodimer.

It is found in the cell inner membrane. In terms of biological role, non-canonical ABC transporter that contains transmembrane domains (TMD), which form a pore in the inner membrane, and an ATP-binding domain (NBD), which is responsible for energy generation. Confers resistance against macrolides. The protein is Macrolide export ATP-binding/permease protein MacB of Brucella melitensis biotype 1 (strain ATCC 23456 / CCUG 17765 / NCTC 10094 / 16M).